A 332-amino-acid polypeptide reads, in one-letter code: Holliday junction branch migration complex subunit RuvB (332 aa).

A large ATPase domain (RuvB-L) region spans residues methionine 1–tyrosine 181. Residues leucine 20, arginine 21, glycine 62, lysine 65, threonine 66, threonine 67, glutamate 128–phenylalanine 130, arginine 171, tyrosine 181, and arginine 218 contribute to the ATP site. Mg(2+) is bound at residue threonine 66. The tract at residues alanine 182 to aspartate 252 is small ATPAse domain (RuvB-S). Residues histidine 255–lysine 332 are head domain (RuvB-H). Residues arginine 291, arginine 310, arginine 312, and arginine 315 each coordinate DNA.

This sequence belongs to the RuvB family. In terms of assembly, homohexamer. Forms an RuvA(8)-RuvB(12)-Holliday junction (HJ) complex. HJ DNA is sandwiched between 2 RuvA tetramers; dsDNA enters through RuvA and exits via RuvB. An RuvB hexamer assembles on each DNA strand where it exits the tetramer. Each RuvB hexamer is contacted by two RuvA subunits (via domain III) on 2 adjacent RuvB subunits; this complex drives branch migration. In the full resolvosome a probable DNA-RuvA(4)-RuvB(12)-RuvC(2) complex forms which resolves the HJ.

It localises to the cytoplasm. It carries out the reaction ATP + H2O = ADP + phosphate + H(+). Functionally, the RuvA-RuvB-RuvC complex processes Holliday junction (HJ) DNA during genetic recombination and DNA repair, while the RuvA-RuvB complex plays an important role in the rescue of blocked DNA replication forks via replication fork reversal (RFR). RuvA specifically binds to HJ cruciform DNA, conferring on it an open structure. The RuvB hexamer acts as an ATP-dependent pump, pulling dsDNA into and through the RuvAB complex. RuvB forms 2 homohexamers on either side of HJ DNA bound by 1 or 2 RuvA tetramers; 4 subunits per hexamer contact DNA at a time. Coordinated motions by a converter formed by DNA-disengaged RuvB subunits stimulates ATP hydrolysis and nucleotide exchange. Immobilization of the converter enables RuvB to convert the ATP-contained energy into a lever motion, pulling 2 nucleotides of DNA out of the RuvA tetramer per ATP hydrolyzed, thus driving DNA branch migration. The RuvB motors rotate together with the DNA substrate, which together with the progressing nucleotide cycle form the mechanistic basis for DNA recombination by continuous HJ branch migration. Branch migration allows RuvC to scan DNA until it finds its consensus sequence, where it cleaves and resolves cruciform DNA. The polypeptide is Holliday junction branch migration complex subunit RuvB (Streptococcus pneumoniae (strain CGSP14)).